The chain runs to 777 residues: Phosphoribosylformylglycinamidine synthase subunit PurL (777 aa).

The active site involves His-50. 2 residues coordinate ATP: Tyr-53 and Lys-92. Glu-94 contributes to the Mg(2+) binding site. Substrate-binding positions include 95–98 (SHNH) and Arg-117. The active-site Proton acceptor is the His-96. Asp-118 contributes to the Mg(2+) binding site. Gln-241 is a substrate binding site. Asp-269 contributes to the Mg(2+) binding site. A substrate-binding site is contributed by 313–315 (ESQ). ATP contacts are provided by Asp-520 and Gly-557. Residue Asn-558 coordinates Mg(2+). Ser-560 provides a ligand contact to substrate.

Belongs to the FGAMS family. As to quaternary structure, monomer. Part of the FGAM synthase complex composed of 1 PurL, 1 PurQ and 2 PurS subunits.

Its subcellular location is the cytoplasm. The catalysed reaction is N(2)-formyl-N(1)-(5-phospho-beta-D-ribosyl)glycinamide + L-glutamine + ATP + H2O = 2-formamido-N(1)-(5-O-phospho-beta-D-ribosyl)acetamidine + L-glutamate + ADP + phosphate + H(+). Its pathway is purine metabolism; IMP biosynthesis via de novo pathway; 5-amino-1-(5-phospho-D-ribosyl)imidazole from N(2)-formyl-N(1)-(5-phospho-D-ribosyl)glycinamide: step 1/2. Functionally, part of the phosphoribosylformylglycinamidine synthase complex involved in the purines biosynthetic pathway. Catalyzes the ATP-dependent conversion of formylglycinamide ribonucleotide (FGAR) and glutamine to yield formylglycinamidine ribonucleotide (FGAM) and glutamate. The FGAM synthase complex is composed of three subunits. PurQ produces an ammonia molecule by converting glutamine to glutamate. PurL transfers the ammonia molecule to FGAR to form FGAM in an ATP-dependent manner. PurS interacts with PurQ and PurL and is thought to assist in the transfer of the ammonia molecule from PurQ to PurL. The protein is Phosphoribosylformylglycinamidine synthase subunit PurL of Trichormus variabilis (strain ATCC 29413 / PCC 7937) (Anabaena variabilis).